A 501-amino-acid polypeptide reads, in one-letter code: Aldehyde dehydrogenase 1A1 (501 aa).

Ser2 bears the N-acetylserine mark. 2 positions are modified to N6-acetyllysine: Lys91 and Lys128. Residues 167–170 (IPWN), 193–196 (KPAE), 226–227 (GP), and 246–247 (GS) each bind NAD(+). Position 252 is an N6-acetyllysine (Lys252). Glu269 acts as the Proton acceptor in catalysis. 269-271 (ELG) is a binding site for NAD(+). Cys303 functions as the Nucleophile in the catalytic mechanism. A mediates interaction with PRMT3 region spans residues 336–501 (LTPGVTQGPQ…VTVKISQKNS (166 aa)). Phosphothreonine is present on Thr337. 349-353 (EQYDK) serves as a coordination point for NAD(+). N6-acetyllysine occurs at positions 353 and 367. 400-402 (EIF) serves as a coordination point for NAD(+). Position 410 is an N6-acetyllysine (Lys410). Ser413 is subject to Phosphoserine. N6-acetyllysine occurs at positions 419, 435, and 495.

This sequence belongs to the aldehyde dehydrogenase family. Homotetramer. Interacts with PRMT3; the interaction is direct, inhibits ALDH1A1 aldehyde dehydrogenase activity and is independent of the methyltransferase activity of PRMT3. In terms of processing, the N-terminus is blocked most probably by acetylation. As to expression, expressed by erythrocytes (at protein level).

The protein resides in the cytoplasm. Its subcellular location is the cytosol. The protein localises to the cell projection. It is found in the axon. It catalyses the reaction an aldehyde + NAD(+) + H2O = a carboxylate + NADH + 2 H(+). It carries out the reaction all-trans-retinal + NAD(+) + H2O = all-trans-retinoate + NADH + 2 H(+). The enzyme catalyses 9-cis-retinal + NAD(+) + H2O = 9-cis-retinoate + NADH + 2 H(+). The catalysed reaction is 11-cis-retinal + NAD(+) + H2O = 11-cis-retinoate + NADH + 2 H(+). It catalyses the reaction 13-cis-retinal + NAD(+) + H2O = 13-cis-retinoate + NADH + 2 H(+). It carries out the reaction 3-deoxyglucosone + NAD(+) + H2O = 2-dehydro-3-deoxy-D-gluconate + NADH + 2 H(+). The enzyme catalyses (E)-4-hydroxynon-2-enal + NAD(+) + H2O = (E)-4-hydroxynon-2-enoate + NADH + 2 H(+). The catalysed reaction is malonaldehyde + NAD(+) + H2O = 3-oxopropanoate + NADH + 2 H(+). It catalyses the reaction hexanal + NAD(+) + H2O = hexanoate + NADH + 2 H(+). It carries out the reaction propanal + NAD(+) + H2O = propanoate + NADH + 2 H(+). The enzyme catalyses acetaldehyde + NAD(+) + H2O = acetate + NADH + 2 H(+). The catalysed reaction is benzaldehyde + NAD(+) + H2O = benzoate + NADH + 2 H(+). It catalyses the reaction 4-aminobutanal + NAD(+) + H2O = 4-aminobutanoate + NADH + 2 H(+). It functions in the pathway cofactor metabolism; retinol metabolism. Its activity is regulated as follows. Inhibited by citral, disulfiram, and cyanamide. Activated by diethylstilbestrol. Inhibited by duocarmycin analogs. Functionally, cytosolic dehydrogenase that catalyzes the irreversible oxidation of a wide range of aldehydes to their corresponding carboxylic acid. Functions downstream of retinol dehydrogenases and catalyzes the oxidation of retinaldehyde into retinoic acid, the second step in the oxidation of retinol/vitamin A into retinoic acid. This pathway is crucial to control the levels of retinol and retinoic acid, two important molecules which excess can be teratogenic and cytotoxic. Also oxidizes aldehydes resulting from lipid peroxidation like (E)-4-hydroxynon-2-enal/HNE, malonaldehyde and hexanal that form protein adducts and are highly cytotoxic. By participating for instance to the clearance of (E)-4-hydroxynon-2-enal/HNE in the lens epithelium prevents the formation of HNE-protein adducts and lens opacification. Also functions downstream of fructosamine-3-kinase in the fructosamine degradation pathway by catalyzing the oxidation of 3-deoxyglucosone, the carbohydrate product of fructosamine 3-phosphate decomposition, which is itself a potent glycating agent that may react with lysine and arginine side-chains of proteins. Also has an aminobutyraldehyde dehydrogenase activity and is probably part of an alternative pathway for the biosynthesis of GABA/4-aminobutanoate in midbrain, thereby playing a role in GABAergic synaptic transmission. This Homo sapiens (Human) protein is Aldehyde dehydrogenase 1A1.